Consider the following 503-residue polypeptide: MTDIQNKNYIIALDQGTTSSRAIIFDRDANVVCTAQREFTQHYPQAGWVEHDPMEIFATQSAVMVEALAQAGLHHDQVAAIGITNQRETTVVWDKVTGRPIYNAIVWQCRRSTEIQICQQLKRDGHEQYINDTTGLVTDPYFSGTKLKWILDNVEGSRERARNGELLFGTIDSWLIWKFTGGKTHVTDYTNASRTMLFNIHTLEWDAKMLEILDVPREMLPEVKSSSEIYGRTKVASPSAAIAGDQQAALFGQMCVRGGQAKNTYGTGCFLLMNTGDKAVKSKHGMLTTIACGPRGEVAYALEGAVFNGGSTVQWLRDELKIIADATDTEYFAGKVKDSNGVYLVPAFTGLGAPYWDPYARGALFGLTRGVRVDHIIRAALESIAYQTRDVLDAMQQDSGERLKALRVDGGAVANNFLMQFQADILGTQVERPQMRETTALGAAYLAGLACGFWGSLEELRGKAVIEREFEPQLDEAAKEKLYAGWQKAVSRTRDWEPHEGAE.

Residue Thr-17 coordinates ADP. Residues Thr-17, Thr-18, and Ser-19 each coordinate ATP. Thr-17 provides a ligand contact to sn-glycerol 3-phosphate. Arg-21 lines the ADP pocket. Residues Arg-87, Glu-88, Tyr-141, and Asp-245 each coordinate sn-glycerol 3-phosphate. The glycerol site is built by Arg-87, Glu-88, Tyr-141, Asp-245, and Gln-246. ADP-binding residues include Thr-267 and Gly-310. Residues Thr-267, Gly-310, Gln-314, and Gly-411 each contribute to the ATP site. ADP contacts are provided by Gly-411 and Asn-415.

This sequence belongs to the FGGY kinase family.

The catalysed reaction is glycerol + ATP = sn-glycerol 3-phosphate + ADP + H(+). It functions in the pathway polyol metabolism; glycerol degradation via glycerol kinase pathway; sn-glycerol 3-phosphate from glycerol: step 1/1. Its activity is regulated as follows. Inhibited by fructose 1,6-bisphosphate (FBP). Functionally, key enzyme in the regulation of glycerol uptake and metabolism. Catalyzes the phosphorylation of glycerol to yield sn-glycerol 3-phosphate. The chain is Glycerol kinase from Pseudomonas tolaasii.